Consider the following 209-residue polypeptide: uncharacterized protein (209 aa).

Transmembrane regions (helical) follow at residues 21 to 41 (LAYLNVLWILFSLAGLVVFGL), 81 to 101 (ILGLIVVTAALFLFADMRIAA), 107 to 127 (VLVNVFVSISLIFAFVVLYVF), and 159 to 179 (AAGAVGVLCLVLFHVTFLLFF).

The protein resides in the cell membrane. This is an uncharacterized protein from Bacillus subtilis (strain 168).